The chain runs to 166 residues: Deglycase PH1704 (166 aa).

In terms of domain architecture, PfpI endopeptidase spans 1 to 166 (MKVLFLTANE…WMREFVKLLK (166 aa)). The active-site Nucleophile is cysteine 100. Histidine 101 is an active-site residue.

Belongs to the peptidase C56 family. As to quaternary structure, homohexamer formed by a dimer of trimers that assemble into a hollow ring structure.

It localises to the cytoplasm. The enzyme catalyses N(omega)-(1-hydroxy-2-oxopropyl)-L-arginyl-[protein] + H2O = lactate + L-arginyl-[protein] + H(+). The catalysed reaction is N(6)-(1-hydroxy-2-oxopropyl)-L-lysyl-[protein] + H2O = lactate + L-lysyl-[protein] + H(+). It carries out the reaction S-(1-hydroxy-2-oxopropyl)-L-cysteinyl-[protein] + H2O = lactate + L-cysteinyl-[protein] + H(+). It catalyses the reaction N(omega)-(1-hydroxy-2-oxoethyl)-L-arginyl-[protein] + H2O = L-arginyl-[protein] + glycolate + H(+). The enzyme catalyses N(6)-(1-hydroxy-2-oxoethyl)-L-lysyl-[protein] + H2O = glycolate + L-lysyl-[protein] + H(+). The catalysed reaction is S-(1-hydroxy-2-oxoethyl)-L-cysteinyl-[protein] + H2O = glycolate + L-cysteinyl-[protein] + H(+). Functionally, deglycase that catalyzes the deglycation of the Maillard adducts formed between amino groups of proteins and reactive carbonyl groups of glyoxals. Thus, functions as a protein deglycase that repairs methylglyoxal- and glyoxal-glycated proteins, and releases repaired proteins and lactate or glycolate, respectively. Deglycates cysteine, arginine and lysine residues in proteins, and thus reactivates these proteins by reversing glycation by glyoxals. Acts on early glycation intermediates (hemithioacetals and aminocarbinols), preventing the formation of advanced glycation endproducts (AGE) that cause irreversible damage. Also displays proteolytic activity. This is Deglycase PH1704 from Pyrococcus horikoshii (strain ATCC 700860 / DSM 12428 / JCM 9974 / NBRC 100139 / OT-3).